The sequence spans 534 residues: Arginine--tRNA ligase (534 aa).

Positions 120-130 (ANPTGFLHLGH) match the 'HIGH' region motif.

Belongs to the class-I aminoacyl-tRNA synthetase family. In terms of assembly, monomer.

The protein localises to the cytoplasm. The enzyme catalyses tRNA(Arg) + L-arginine + ATP = L-arginyl-tRNA(Arg) + AMP + diphosphate. This chain is Arginine--tRNA ligase, found in Mesomycoplasma hyopneumoniae (strain J / ATCC 25934 / NCTC 10110) (Mycoplasma hyopneumoniae).